We begin with the raw amino-acid sequence, 364 residues long: Probable dual-specificity RNA methyltransferase RlmN (364 aa).

The active-site Proton acceptor is Glu-106. The Radical SAM core domain maps to 112–350 (YPRRNTVCIS…SCTVRDTRGR (239 aa)). Residues Cys-119 and Cys-356 are joined by a disulfide bond. 3 residues coordinate [4Fe-4S] cluster: Cys-126, Cys-130, and Cys-133. Residues 177-178 (GE), Ser-211, 234-236 (SLH), and Asn-313 each bind S-adenosyl-L-methionine. Cys-356 acts as the S-methylcysteine intermediate in catalysis.

It belongs to the radical SAM superfamily. RlmN family. The cofactor is [4Fe-4S] cluster.

The protein localises to the cytoplasm. The catalysed reaction is adenosine(2503) in 23S rRNA + 2 reduced [2Fe-2S]-[ferredoxin] + 2 S-adenosyl-L-methionine = 2-methyladenosine(2503) in 23S rRNA + 5'-deoxyadenosine + L-methionine + 2 oxidized [2Fe-2S]-[ferredoxin] + S-adenosyl-L-homocysteine. It catalyses the reaction adenosine(37) in tRNA + 2 reduced [2Fe-2S]-[ferredoxin] + 2 S-adenosyl-L-methionine = 2-methyladenosine(37) in tRNA + 5'-deoxyadenosine + L-methionine + 2 oxidized [2Fe-2S]-[ferredoxin] + S-adenosyl-L-homocysteine. Specifically methylates position 2 of adenine 2503 in 23S rRNA and position 2 of adenine 37 in tRNAs. The polypeptide is Probable dual-specificity RNA methyltransferase RlmN (Mycobacterium bovis (strain ATCC BAA-935 / AF2122/97)).